A 148-amino-acid chain; its full sequence is Small ribosomal subunit protein bS6 (148 aa).

A disordered region spans residues 97 to 148; it reads EEGPSAMLQRRDDRERGDRGDRGPRRDFDDRGPRRPREDDRPRRSREDEGDE.

It belongs to the bacterial ribosomal protein bS6 family.

Binds together with bS18 to 16S ribosomal RNA. The protein is Small ribosomal subunit protein bS6 of Chelativorans sp. (strain BNC1).